The following is a 206-amino-acid chain: N-(5'-phosphoribosyl)anthranilate isomerase (206 aa).

It belongs to the TrpF family.

The catalysed reaction is N-(5-phospho-beta-D-ribosyl)anthranilate = 1-(2-carboxyphenylamino)-1-deoxy-D-ribulose 5-phosphate. Its pathway is amino-acid biosynthesis; L-tryptophan biosynthesis; L-tryptophan from chorismate: step 3/5. The chain is N-(5'-phosphoribosyl)anthranilate isomerase from Pseudomonas putida (strain ATCC 47054 / DSM 6125 / CFBP 8728 / NCIMB 11950 / KT2440).